A 718-amino-acid polypeptide reads, in one-letter code: Protein ENHANCED DISEASE RESISTANCE 2 (718 aa).

The PH domain occupies 3-110; sequence KVVYEGWMVR…WKEKIESVID (108 aa). A disordered region spans residues 134 to 174; sequence TGRTASSSDHESQFSAAEDEEDSRRSLMRRTTIGNGPPESV. In terms of domain architecture, START spans 180-392; sequence EFDAELANQN…VAGLREWFSQ (213 aa). Residues 437–483 are disordered; the sequence is RNSLLMDEDSDDDDEFQIAESEQEPETSKPETDVKRPEEEPAHNIDL. Acidic residues predominate over residues 442-461; the sequence is MDEDSDDDDEFQIAESEQEP. The segment covering 462–479 has biased composition (basic and acidic residues); it reads ETSKPETDVKRPEEEPAH. Residues 664-684 form a helical membrane-spanning segment; it reads GVLGLVIGVITSLVVEMAFLV.

In terms of tissue distribution, expressed ubiquitously in all tissues and organs, including leaves, roots, flowers, stems and siliques.

It is found in the endoplasmic reticulum membrane. The protein localises to the cell membrane. It localises to the endosome membrane. Its function is as follows. Negative regulator of the salicylic acid- (SA-) mediated resistance to pathogens, including the biotrophic powdery mildew pathogens Golovinomyces cichoracearum and Blumeria graminis, and the downy mildew pathogen Hyaloperonospora parasitica, probably by limiting the initiation of cell death and the establishment of the hypersensitive response (HR). Prevents ethylene-induced senescence. Binds to phosphatidylinositol-4-phosphate (PtdIns(4)P) in vitro. This is Protein ENHANCED DISEASE RESISTANCE 2 (EDR2) from Arabidopsis thaliana (Mouse-ear cress).